The sequence spans 560 residues: Excitatory amino acid transporter 5 (560 aa).

The Cytoplasmic portion of the chain corresponds to 1–16 (MVPHAILARGRDVCRR). 3 helical membrane-spanning segments follow: residues 17 to 37 (NGLLILSVLSVIVGCLLGFFL), 60 to 80 (MLKMMILPLVVSSLMSGLASL), and 94 to 114 (AYYLWTTFMAVIVGIFMVSII). At 115–216 (HPGSAAQKET…EVVYKSEPGT (102 aa)) the chain is on the extracellular side. Asparagine 191 is a glycosylation site (N-linked (GlcNAc...) asparagine). Transmembrane regions (helical) follow at residues 217–237 (SDGMNVLGIVFFSATMGIMLG), 260–280 (IVAVAVWYFPFGIVFLIAGKI), 300–320 (VVCGLVLHGLFILPLLYFFIT), 330–350 (GILQALLIALATSSSSATLPI), 372–392 (VGATINMDGTALYEAVAAIFI), 414–434 (AASIGAAGIPQAGLVTMVIVL), and 457–477 (FRTMINVLGDALAAGIMAHIC).

This sequence belongs to the dicarboxylate/amino acid:cation symporter (DAACS) (TC 2.A.23) family. SLC1A7 subfamily. As to quaternary structure, interacts with the PDZ domains of DLG4. As to expression, expressed primarily in retina. Detectable in liver, heart, muscle and brain.

It localises to the photoreceptor inner segment membrane. The protein resides in the synaptic cell membrane. The catalysed reaction is K(+)(in) + L-glutamate(out) + 3 Na(+)(out) + H(+)(out) = K(+)(out) + L-glutamate(in) + 3 Na(+)(in) + H(+)(in). It catalyses the reaction K(+)(in) + L-aspartate(out) + 3 Na(+)(out) + H(+)(out) = K(+)(out) + L-aspartate(in) + 3 Na(+)(in) + H(+)(in). The enzyme catalyses D-aspartate(out) + K(+)(in) + 3 Na(+)(out) + H(+)(out) = D-aspartate(in) + K(+)(out) + 3 Na(+)(in) + H(+)(in). Functionally, sodium-dependent, high-affinity amino acid transporter that mediates the uptake of L-glutamate and also L-aspartate and D-aspartate. Functions as a symporter that transports one amino acid molecule together with two or three Na(+) ions and one proton, in parallel with the counter-transport of one K(+) ion. Acts primarily as an inhibitory glutamate-gated chloride channel being a major inhibitory presynaptic receptor at mammalian rod bipolar cell axon terminals. Glutamate binding gates a large Cl(-) conductance that mediates inhibition, affecting visual processing in the retina. The polypeptide is Excitatory amino acid transporter 5 (Homo sapiens (Human)).